A 1007-amino-acid chain; its full sequence is Mediator of RNA polymerase II transcription subunit 5 (1007 aa).

The protein belongs to the Mediator complex subunit 5 family. As to quaternary structure, component of the Mediator complex.

It localises to the nucleus. Its function is as follows. Component of the Mediator complex, a coactivator involved in the regulated transcription of nearly all RNA polymerase II-dependent genes. Mediator functions as a bridge to convey information from gene-specific regulatory proteins to the basal RNA polymerase II transcription machinery. Mediator is recruited to promoters by direct interactions with regulatory proteins and serves as a scaffold for the assembly of a functional preinitiation complex with RNA polymerase II and the general transcription factors. This chain is Mediator of RNA polymerase II transcription subunit 5 (nut1), found in Aspergillus fumigatus (strain ATCC MYA-4609 / CBS 101355 / FGSC A1100 / Af293) (Neosartorya fumigata).